A 909-amino-acid polypeptide reads, in one-letter code: Protein translocase subunit SecA (909 aa).

Residues Gln87 and 105-109 (GEGKT) contribute to the ATP site. The segment at 246-265 (LEQQEKEDEEGKNGDGDYTI) is disordered. Over residues 254-265 (EEGKNGDGDYTI) the composition is skewed to basic and acidic residues. ATP is bound at residue Asp512. Residues 834 to 858 (ESDVEAVEEQRRQADEQPKQYEHET) are compositionally biased toward basic and acidic residues. The segment at 834-899 (ESDVEAVEEQ…NDPCPCGSGL (66 aa)) is disordered. Residues 859–875 (ASATQAPEQAPEAAPAA) show a composition bias toward low complexity. 4 residues coordinate Zn(2+): Cys893, Cys895, Cys904, and His905.

This sequence belongs to the SecA family. As to quaternary structure, monomer and homodimer. Part of the essential Sec protein translocation apparatus which comprises SecA, SecYEG and auxiliary proteins SecDF-YajC and YidC. It depends on Zn(2+) as a cofactor.

Its subcellular location is the cell inner membrane. It localises to the cytoplasm. It carries out the reaction ATP + H2O + cellular proteinSide 1 = ADP + phosphate + cellular proteinSide 2.. In terms of biological role, part of the Sec protein translocase complex. Interacts with the SecYEG preprotein conducting channel. Has a central role in coupling the hydrolysis of ATP to the transfer of proteins into and across the cell membrane, serving both as a receptor for the preprotein-SecB complex and as an ATP-driven molecular motor driving the stepwise translocation of polypeptide chains across the membrane. The polypeptide is Protein translocase subunit SecA (Pseudoalteromonas atlantica (strain T6c / ATCC BAA-1087)).